A 491-amino-acid chain; its full sequence is V-type proton ATPase subunit B 1 (491 aa).

Arginine 380 provides a ligand contact to ATP.

The protein belongs to the ATPase alpha/beta chains family. As to quaternary structure, V-ATPase is a heteromultimeric enzyme made up of two complexes: the ATP-hydrolytic V1 complex and the proton translocation V0 complex. The V1 complex consists of three catalytic AB heterodimers that form a heterohexamer, three peripheral stalks each consisting of EG heterodimers, one central rotor including subunits D and F, and the regulatory subunits C and H. The proton translocation complex V0 consists of the proton transport subunit a, a ring of proteolipid subunits c9c'', rotary subunit d, subunits e and f, and the accessory subunits vah-19/Ac45 and vah-20/PRR. As to expression, expressed ubiquitously. Highly expressed in the H-shaped excretory cell, the excretory pore, the intestine, and hypodermal cells. Expressed in the nervous system. Expressed at low levels in muscles.

Non-catalytic subunit of the V1 complex of vacuolar(H+)-ATPase (V-ATPase), a multisubunit enzyme composed of a peripheral complex (V1) that hydrolyzes ATP and a membrane integral complex (V0) that translocates protons. V-ATPase is responsible for acidifying and maintaining the pH of intracellular compartments and in some cell types, is targeted to the plasma membrane, where it is responsible for acidifying the extracellular environment. Essential for the proper assembly and activity of V-ATPase. Required maternally for early embryogenesis and zygotically during morphogenesis. Specifically, involved in the clearance of apoptotic cell corpses in embryos. Also, during embryonic development, the V-ATPase is required to repress fusion of epidermal cells probably by negatively regulating eff-1-mediated cell fusion. In neurons, required for necrotic cell death by promoting intracellular acidification. Required for cell death induced by hypoxia. Required for acidification of synaptic vesicles and the release of neurotransmitters from adult neurons. This is V-type proton ATPase subunit B 1 from Caenorhabditis elegans.